Reading from the N-terminus, the 215-residue chain is Protein NETWORKED 3B (215 aa).

The NAB domain maps to 5 to 90; sequence SKWWWIGANH…QKHDLLIKTS (86 aa). Residues 134–165 adopt a coiled-coil conformation; sequence DETMKEELEILREENRVYKEKKEVVTRLLANL.

The protein belongs to the NET family. In terms of assembly, interacts with F-actin.

Plant-specific actin binding protein. May be part of a membrane-cytoskeletal adapter complex. This Arabidopsis thaliana (Mouse-ear cress) protein is Protein NETWORKED 3B.